Consider the following 164-residue polypeptide: uncharacterized protein (164 aa).

Transmembrane regions (helical) follow at residues 25–45 (QFGFSYGLFGLSGALIYPLLG), 63–83 (GMAVLLLYVPHIGSVVQVYIV), 120–140 (FWTAVFSAAAIMLGGFLADFF), and 141–161 (TVQMIFYASSILYFLSGLMMM).

This sequence belongs to the major facilitator superfamily.

Its subcellular location is the cell membrane. This is an uncharacterized protein from Bacillus subtilis (strain 168).